The primary structure comprises 209 residues: Large ribosomal subunit protein uL3 (209 aa).

The segment at asparagine 127–methionine 166 is disordered.

It belongs to the universal ribosomal protein uL3 family. In terms of assembly, part of the 50S ribosomal subunit. Forms a cluster with proteins L14 and L19.

In terms of biological role, one of the primary rRNA binding proteins, it binds directly near the 3'-end of the 23S rRNA, where it nucleates assembly of the 50S subunit. The sequence is that of Large ribosomal subunit protein uL3 from Chlorobium phaeovibrioides (strain DSM 265 / 1930) (Prosthecochloris vibrioformis (strain DSM 265)).